Here is a 339-residue protein sequence, read N- to C-terminus: Dicamba O-demethylase, oxygenase component (339 aa).

Residues Trp-8–Ile-110 form the Rieske domain. Cys-48, His-50, Cys-67, and His-70 together coordinate [2Fe-2S] cluster. 2 residues coordinate Fe cation: His-159 and His-164. 3,6-dichloro-2-methoxybenzoate-binding residues include Asn-229, His-250, and Trp-284. A Fe cation-binding site is contributed by Asp-293.

Homotrimer. The dicamba O-demethylase multicomponent enzyme system is composed of an oxygenase component (DdmC) and an electron transfer component formed by a ferredoxin reductase (DdmA) and a ferredoxin (DdmB). In vitro, dicamba O-demethylase assays in which DdmA2 is substituted for DdmA1 demonstrate that the two enzymes possess nearly identical activities. The cofactor is [2Fe-2S] cluster.

The enzyme catalyses 3,6-dichloro-2-methoxybenzoate + 2 reduced [2Fe-2S]-[ferredoxin] + O2 + 2 H(+) = 3,6-dichlorosalicylate + formaldehyde + 2 oxidized [2Fe-2S]-[ferredoxin] + H2O. Activity enhanced by Fe(2+) and Mg(2+) ions. In terms of biological role, component of the dicamba O-demethylase multicomponent enzyme system involved in the degradation of the herbicide dicamba. In vitro, catalyzes the O-demethylation of 2-methoxy-3,6-dichlorobenzoic acid (dicamba) to yield 3,6-dichlorosalicylic acid (DCSA) via an exocyclic monooxygenation. The protein is Dicamba O-demethylase, oxygenase component of Stenotrophomonas maltophilia (Pseudomonas maltophilia).